Consider the following 310-residue polypeptide: 2-dehydro-3-deoxygluconokinase (310 aa).

Substrate contacts are provided by residues 29–33 (GDTLN), Y89, 103–105 (YWR), and R171. ATP contacts are provided by residues 169–171 (NYR), 229–234 (KRGADA), and 262–265 (AAGD). D265 contributes to the substrate binding site. D265 serves as the catalytic Proton acceptor.

The protein belongs to the carbohydrate kinase PfkB family.

It catalyses the reaction 2-dehydro-3-deoxy-D-gluconate + ATP = 2-dehydro-3-deoxy-6-phospho-D-gluconate + ADP + H(+). Its pathway is carbohydrate acid metabolism; 2-dehydro-3-deoxy-D-gluconate degradation; D-glyceraldehyde 3-phosphate and pyruvate from 2-dehydro-3-deoxy-D-gluconate: step 1/2. Its function is as follows. Catalyzes the phosphorylation of 2-keto-3-deoxygluconate (KDG) to produce 2-keto-3-deoxy-6-phosphogluconate (KDPG). This is 2-dehydro-3-deoxygluconokinase from Dickeya dadantii (strain 3937) (Erwinia chrysanthemi (strain 3937)).